We begin with the raw amino-acid sequence, 949 residues long: MAM domain-containing glycosylphosphatidylinositol anchor protein 2 (949 aa).

Positions 1–25 (MDLVYGLVWLLTVLLEGISGQGVYA) are cleaved as a signal peptide. Ig-like domains are found at residues 27-127 (PTVR…IRVD) and 134-232 (PVVT…KMVS). 2 cysteine pairs are disulfide-bonded: Cys-62/Cys-110 and Cys-159/Cys-216. N-linked (GlcNAc...) asparagine glycosylation is found at Asn-92, Asn-213, and Asn-237. Ig-like domains lie at 242–328 (PSIK…NIIV), 340–436 (PDPY…VNIS), 442–533 (PNLT…ALVQ), and 540–627 (PAVE…FLVT). Cystine bridges form between Cys-264/Cys-310 and Cys-359/Cys-417. Asn-434, Asn-443, Asn-504, Asn-610, and Asn-703 each carry an N-linked (GlcNAc...) asparagine glycan. Cystine bridges form between Cys-465–Cys-515 and Cys-561–Cys-611. The region spanning 638–738 (DTYNPVWQNR…TIRVIKYTGE (101 aa)) is the Fibronectin type-III domain. Residues 739–914 (FHCGFEDGNI…VSIAEGECAK (176 aa)) form the MAM domain. Asp-924 carries the GPI-anchor amidated aspartate lipid modification. A propeptide spans 925–949 (GAVGILVHIWLFPVIILISILSPRR) (removed in mature form).

As to quaternary structure, interacts (through the Ig-like domains) with NLGN2.

The protein localises to the cell membrane. May be involved in cell-cell interactions. This is MAM domain-containing glycosylphosphatidylinositol anchor protein 2 (Mdga2) from Mus musculus (Mouse).